The sequence spans 210 residues: Methylthioribulose-1-phosphate dehydratase (210 aa).

Zn(2+) is bound by residues H97 and H99.

Belongs to the aldolase class II family. MtnB subfamily. In terms of assembly, homotetramer. Requires Zn(2+) as cofactor.

It carries out the reaction 5-(methylsulfanyl)-D-ribulose 1-phosphate = 5-methylsulfanyl-2,3-dioxopentyl phosphate + H2O. It functions in the pathway amino-acid biosynthesis; L-methionine biosynthesis via salvage pathway; L-methionine from S-methyl-5-thio-alpha-D-ribose 1-phosphate: step 2/6. In terms of biological role, catalyzes the dehydration of methylthioribulose-1-phosphate (MTRu-1-P) into 2,3-diketo-5-methylthiopentyl-1-phosphate (DK-MTP-1-P). This chain is Methylthioribulose-1-phosphate dehydratase, found in Geobacillus kaustophilus (strain HTA426).